The sequence spans 171 residues: MANPKNTESLAELKNRFADIDSVFVTEYRGLTVAQITELRRALGSDVQYSVAKNTLIKLAAKEAGIEGLDDILTGPTAVAFIKGEAVDAAKAMKKFASENKAFVIKGGYMDGNALSAAQVDAIAELDNRETTLAKLAGAMKGNLAKAAGLFNAPASQVARLGAALQEKKEA.

The protein belongs to the universal ribosomal protein uL10 family. As to quaternary structure, part of the ribosomal stalk of the 50S ribosomal subunit. The N-terminus interacts with L11 and the large rRNA to form the base of the stalk. The C-terminus forms an elongated spine to which L12 dimers bind in a sequential fashion forming a multimeric L10(L12)X complex.

Functionally, forms part of the ribosomal stalk, playing a central role in the interaction of the ribosome with GTP-bound translation factors. The polypeptide is Large ribosomal subunit protein uL10 (Corynebacterium diphtheriae (strain ATCC 700971 / NCTC 13129 / Biotype gravis)).